We begin with the raw amino-acid sequence, 187 residues long: Ribosome-recycling factor (187 aa).

The protein belongs to the RRF family.

It is found in the cytoplasm. In terms of biological role, responsible for the release of ribosomes from messenger RNA at the termination of protein biosynthesis. May increase the efficiency of translation by recycling ribosomes from one round of translation to another. This Paracoccus zeaxanthinifaciens protein is Ribosome-recycling factor.